Here is a 215-residue protein sequence, read N- to C-terminus: Proteasome subunit beta inpE (215 aa).

Belongs to the peptidase T1B family.

The protein resides in the cytoplasm. It is found in the nucleus. It carries out the reaction Cleavage of peptide bonds with very broad specificity.. Its function is as follows. Proteasome subunit beta type-6; part of the inp gene cluster that mediates the biosynthesis of fellutamide B, a mycotoxin that acts as a proteasome inhibitor. In the first step of fellutabmide B biosynthesis inpC activates 3-hydroxydodecanoic acid to generate 3-hydroxydodecanoyl-AMP that is then loaded onto the T0 domain of inpB. The 3-hydroxydodecanoyl-S-phosphopantetheinyl-T0 is sequentially extended with L-Asn and L-Gln by the two CAT modules of inpB. The linear lipodipeptide from inpB is then transferred onto inpA for the addition of the third amino acid, L-Leu. Reductive releasing of the lipotripeptide by the TE domain of inpA produces (2S)-fellutamide B. InpF might be involved in the release and transfer of the lipodipeptide from inpB to inpA. The inp cluster-encoded proteasome subunit inpE confers resistance to internally produced fellutamides. The MFS efflux transporter inpD may contribute to fellutamide resistance as well. This is Proteasome subunit beta inpE (inpE) from Emericella nidulans (strain FGSC A4 / ATCC 38163 / CBS 112.46 / NRRL 194 / M139) (Aspergillus nidulans).